A 315-amino-acid polypeptide reads, in one-letter code: Neuroguidin (315 aa).

A2 carries the post-translational modification N-acetylalanine. Residues 5 to 42 (EVLESDLPNAVALLKNLQEQVMAVTAQVQTLTKKVQAK) adopt a coiled-coil conformation. The tract at residues 41–174 (AKAYPTEKGL…KGTAKKYVPP (134 aa)) is necessary for interaction with EIF4E. A phosphoserine mark is found at S121, S142, and S143. A disordered region spans residues 123-174 (SENDPLRFKPHPSNMMSKLSSEDEEEDEAEEGQSGASGKKSGKGTAKKYVPP). Positions 144-153 (EDEEEDEAEE) are enriched in acidic residues. Residues 181–205 (YDETEAEREKKRLERAKRRALSSSV) adopt a coiled-coil conformation. Phosphoserine is present on residues S204 and S214. The disordered stretch occupies residues 252–315 (SKREKGRRKR…RKKKGFRRRR (64 aa)). Residues 264 to 276 (VMSSQLHSLTHFS) are compositionally biased toward polar residues. A compositionally biased stretch (basic residues) spans 295–315 (TKKRKKIPKKGRKKKGFRRRR).

Belongs to the SAS10 family. As to quaternary structure, part of the small subunit (SSU) processome, composed of more than 70 proteins and the RNA chaperone small nucleolar RNA (snoRNA) U3. Interacts with CPEB1 and EIF4E.

Its subcellular location is the nucleus. The protein localises to the nucleolus. The protein resides in the chromosome. It localises to the centromere. It is found in the cytoplasm. Its subcellular location is the cell projection. The protein localises to the axon. The protein resides in the dendrite. It localises to the filopodium. Its function is as follows. Part of the small subunit (SSU) processome, first precursor of the small eukaryotic ribosomal subunit. During the assembly of the SSU processome in the nucleolus, many ribosome biogenesis factors, an RNA chaperone and ribosomal proteins associate with the nascent pre-rRNA and work in concert to generate RNA folding, modifications, rearrangements and cleavage as well as targeted degradation of pre-ribosomal RNA by the RNA exosome. Its dissociation from the complex determines the transition from state pre-A1 to state pre-A1*. Inhibits mRNA translation in a cytoplasmic polyadenylation element (CPE)-dependent manner. The protein is Neuroguidin (NGDN) of Bos taurus (Bovine).